A 436-amino-acid chain; its full sequence is 3-ketoacyl-CoA thiolase (436 aa).

Cys-99 serves as the catalytic Acyl-thioester intermediate. Residues His-392 and Cys-422 each act as proton acceptor in the active site.

Belongs to the thiolase-like superfamily. Thiolase family. In terms of assembly, heterotetramer of two alpha chains (FadJ) and two beta chains (FadI).

It localises to the cytoplasm. It carries out the reaction an acyl-CoA + acetyl-CoA = a 3-oxoacyl-CoA + CoA. The protein operates within lipid metabolism; fatty acid beta-oxidation. In terms of biological role, catalyzes the final step of fatty acid oxidation in which acetyl-CoA is released and the CoA ester of a fatty acid two carbons shorter is formed. This is 3-ketoacyl-CoA thiolase from Yersinia pseudotuberculosis serotype O:1b (strain IP 31758).